The following is a 240-amino-acid chain: Methylthioribulose-1-phosphate dehydratase (240 aa).

C99 contributes to the substrate binding site. Residues H116 and H118 each contribute to the Zn(2+) site. Residue E145 is the Proton donor/acceptor of the active site. H201 serves as a coordination point for Zn(2+).

The protein belongs to the aldolase class II family. MtnB subfamily. The cofactor is Zn(2+).

It is found in the cytoplasm. It carries out the reaction 5-(methylsulfanyl)-D-ribulose 1-phosphate = 5-methylsulfanyl-2,3-dioxopentyl phosphate + H2O. It participates in amino-acid biosynthesis; L-methionine biosynthesis via salvage pathway; L-methionine from S-methyl-5-thio-alpha-D-ribose 1-phosphate: step 2/6. In terms of biological role, catalyzes the dehydration of methylthioribulose-1-phosphate (MTRu-1-P) into 2,3-diketo-5-methylthiopentyl-1-phosphate (DK-MTP-1-P). This chain is Methylthioribulose-1-phosphate dehydratase, found in Ajellomyces capsulatus (strain G186AR / H82 / ATCC MYA-2454 / RMSCC 2432) (Darling's disease fungus).